The chain runs to 489 residues: Long chain base biosynthesis protein 2b (489 aa).

A helical membrane pass occupies residues 2 to 22 (ITIPYLTAVSTYFSYGLLFAF). An N6-(pyridoxal phosphate)lysine modification is found at Lys-311.

Belongs to the class-II pyridoxal-phosphate-dependent aminotransferase family. In terms of assembly, heterodimer with LCB1. Component of the serine palmitoyltransferase (SPT) complex, composed of LCB1 and LCB2 (LCB2a or LCB2b). Pyridoxal 5'-phosphate is required as a cofactor. Ubiquitous with the highest expression in flowers.

Its subcellular location is the endoplasmic reticulum membrane. The enzyme catalyses L-serine + hexadecanoyl-CoA + H(+) = 3-oxosphinganine + CO2 + CoA. The protein operates within lipid metabolism; sphingolipid metabolism. Its function is as follows. Serine palmitoyltransferase (SPT). The heterodimer formed with LCB1 constitutes the catalytic core. Plays an important role during male gametogenesis and embryogenesis. The chain is Long chain base biosynthesis protein 2b (LCB2b) from Arabidopsis thaliana (Mouse-ear cress).